A 327-amino-acid polypeptide reads, in one-letter code: Cobalamin biosynthesis protein CobD (327 aa).

The next 4 helical transmembrane spans lie at 61-78 (MWLTVGLVAACIFAGLVI), 80-102 (SILPHAGTAGAIVEVVIVAILLA), 160-182 (GIVAPAFWFLVGGLPGLFAYKLI), and 300-322 (AALVLFWSTMSLMTGLVIAASLV).

Belongs to the CobD/CbiB family.

It is found in the cell membrane. It functions in the pathway cofactor biosynthesis; adenosylcobalamin biosynthesis. In terms of biological role, converts cobyric acid to cobinamide by the addition of aminopropanol on the F carboxylic group. This Brucella suis biovar 1 (strain 1330) protein is Cobalamin biosynthesis protein CobD.